The sequence spans 160 residues: Epithelial membrane protein 1 (160 aa).

Residues 1-21 (MLVLLAGLFVVHIATAIMLFV) form a helical membrane-spanning segment. N-linked (GlcNAc...) asparagine glycans are attached at residues N35 and N43. Helical transmembrane passes span 67-87 (FMIL…FQLF) and 95-115 (FFLS…GVSI). Residue N128 is glycosylated (N-linked (GlcNAc...) asparagine). A helical membrane pass occupies residues 137–157 (FILTWICFCFSFIIGILYMVL).

This sequence belongs to the PMP-22/EMP/MP20 family.

It is found in the membrane. This is Epithelial membrane protein 1 (Emp1) from Mus musculus (Mouse).